The primary structure comprises 192 residues: UPF0312 protein plu2095 (192 aa).

Positions 1–23 are cleaved as a signal peptide; sequence MLKKTLLGLTAGALLLNASSALA.

It belongs to the UPF0312 family. Type 1 subfamily.

Its subcellular location is the periplasm. This chain is UPF0312 protein plu2095, found in Photorhabdus laumondii subsp. laumondii (strain DSM 15139 / CIP 105565 / TT01) (Photorhabdus luminescens subsp. laumondii).